The sequence spans 590 residues: Arginine--tRNA ligase (590 aa).

The short motif at 131–141 (PNIAKEMHVGH) is the 'HIGH' region element.

This sequence belongs to the class-I aminoacyl-tRNA synthetase family. In terms of assembly, monomer.

It is found in the cytoplasm. The enzyme catalyses tRNA(Arg) + L-arginine + ATP = L-arginyl-tRNA(Arg) + AMP + diphosphate. The polypeptide is Arginine--tRNA ligase (Synechococcus sp. (strain RCC307)).